A 345-amino-acid chain; its full sequence is Opioid-binding protein/cell adhesion molecule (345 aa).

The signal sequence occupies residues 1 to 27 (MGVCGSLFQPWKCLVVVSLRLLFLVPT). Ig-like C2-type domains are found at residues 39–126 (PKAM…PKTS), 136–219 (PQIM…VKIT), and 223–310 (PPYI…ASIT). N-linked (GlcNAc...) asparagine glycosylation is found at Asn44, Asn70, and Asn140. Cysteines 57 and 115 form a disulfide. Disulfide bonds link Cys157/Cys202 and Cys244/Cys296. N-linked (GlcNAc...) asparagine glycans are attached at residues Asn285, Asn293, and Asn306. Residue Asn322 is the site of GPI-anchor amidated asparagine attachment. The propeptide at 323-345 (SASRALACLWLSGTLFAHFFIKF) is removed in mature form.

It belongs to the immunoglobulin superfamily. IgLON family.

It is found in the cell membrane. In terms of biological role, binds opioids in the presence of acidic lipids; probably involved in cell contact. This Bos taurus (Bovine) protein is Opioid-binding protein/cell adhesion molecule (OPCML).